The chain runs to 175 residues: Adenine phosphoribosyltransferase (175 aa).

The protein belongs to the purine/pyrimidine phosphoribosyltransferase family. In terms of assembly, homodimer.

It localises to the cytoplasm. It catalyses the reaction AMP + diphosphate = 5-phospho-alpha-D-ribose 1-diphosphate + adenine. It functions in the pathway purine metabolism; AMP biosynthesis via salvage pathway; AMP from adenine: step 1/1. Functionally, catalyzes a salvage reaction resulting in the formation of AMP, that is energically less costly than de novo synthesis. This Caldicellulosiruptor saccharolyticus (strain ATCC 43494 / DSM 8903 / Tp8T 6331) protein is Adenine phosphoribosyltransferase.